The sequence spans 324 residues: PGR5-like protein 1A, chloroplastic (324 aa).

Residues 1–60 (MGSKMLFSLTSPRLFSAVSRKPSSSFSPSPPSPSSRTQWTQLSPGKSISLRRRVFLLPAK) constitute a chloroplast transit peptide. Residues 16–42 (SAVSRKPSSSFSPSPPSPSSRTQWTQL) are disordered. Over 61 to 198 (ATTEQSGPVG…KVYSDLAVDY (138 aa)) the chain is Stromal. Cys-82 and Cys-183 are joined by a disulfide. The chain crosses the membrane as a helical span at residues 199–219 (FKMLLLNVPATVVALGLFFFL). Residues 220 to 236 (DDITGFEITYIMELPEP) are Lumenal, thylakoid-facing. The helical transmembrane segment at 237–257 (YSFIFTWFAAVPVIVYLALSI) threads the bilayer. Residues 258–324 (TKLIIKDFLI…LITLPEGSQA (67 aa)) are Stromal-facing.

The protein belongs to the PGR5 family. In terms of assembly, homodimer and heterodimer with PGR5. Interacts with PGR5, FD2, petC, psaD1, LFNR1 and LFNR2. Also interacts with a Fe-containing cofactor (FCC). In terms of processing, disulfide bonds; Cys-300 and Cys-303 are probably involved in the formation of disulfide bridges with 'Cys-11' and 'Cys-105' of PGR5 while Cys-272 and Cys-275 are probably involved in the binding of a Fe-containing cofactor (FCC).

The protein resides in the plastid. It is found in the chloroplast thylakoid membrane. Inhibited by antimycin A. Its function is as follows. Ferredoxin-plastoquinone reductase involved in cyclic electron flow (CEF) around photosystem I. The homodimer is probably not involved in CEF. The sequence is that of PGR5-like protein 1A, chloroplastic (PGRL1A) from Arabidopsis thaliana (Mouse-ear cress).